The following is a 360-amino-acid chain: C-C chemokine receptor-like 2 (360 aa).

Over 1–42 (MDNYTVAPDDEYDVLILDDYLDNSGPDQVPAPEFLSPQQVLQ) the chain is Extracellular. Asn3 carries an N-linked (GlcNAc...) asparagine glycan. The helical transmembrane segment at 43 to 63 (FCCAVFAVGLLDNVLAVFILV) threads the bilayer. Topologically, residues 64–73 (KYKGLKNLGN) are cytoplasmic. Residues 74–94 (IYFLNLALSNLCFLLPLPFWA) form a helical membrane-spanning segment. Over 95–109 (HTAAHGESPGNGTCK) the chain is Extracellular. N-linked (GlcNAc...) asparagine glycosylation occurs at Asn105. Cys108 and Cys185 are joined by a disulfide. The chain crosses the membrane as a helical span at residues 110-130 (VLVGLHSSGLYSEVFSNILLL). Topologically, residues 131-141 (VQGYRVFSQGR) are cytoplasmic. Residues 142 to 162 (LASIFTTVSCGIVACILAWAM) traverse the membrane as a helical segment. The Extracellular segment spans residues 163-202 (ATALSLPESVFYEPRMERQKHKCAFGKPHFLPIEAPLWKY). The helical transmembrane segment at 203–223 (VLTSKMIILVLAFPLLVFIIC) threads the bilayer. Topologically, residues 224–243 (CRQLRRRQSFRERQYDLHKP) are cytoplasmic. The helical transmembrane segment at 244–264 (ALVITGVFLLMWAPYNTVLFL) threads the bilayer. Residues 265–285 (SAFQEHLSLQDEKSSYHLDAS) are Extracellular-facing. A helical membrane pass occupies residues 286-307 (VQVTQLVATTHCCVNPLLYLLL). Residues 308–360 (DRKAFMRYLRSLFPRCNDIPYQSSGGYQQAPPREGHGRPIELYSNLHQRQDII) lie on the Cytoplasmic side of the membrane.

It belongs to the G-protein coupled receptor 1 family. Expressed in macrophages, astrocytes, in glial cells. Constitutively expressed by mast cells. Detected in bronchial epithelium in OVA-induced airway inflammation. Up-regulated during dendritic cell (DC) maturation.

Its subcellular location is the cell membrane. Receptor for CCL19 and chemerin/RARRES2. Does not appear to be a signaling receptor, but may have a role in modulating chemokine-triggered immune responses by capturing and internalizing CCL19 or by presenting RARRES2 ligand to CMKLR1, a functional signaling receptor. Plays a critical role for the development of Th2 responses. The polypeptide is C-C chemokine receptor-like 2 (Ccrl2) (Mus musculus (Mouse)).